The chain runs to 1373 residues: DNA-directed RNA polymerase subunit beta (1373 aa).

Belongs to the RNA polymerase beta chain family. The RNAP catalytic core consists of 2 alpha, 1 beta, 1 beta' and 1 omega subunit. When a sigma factor is associated with the core the holoenzyme is formed, which can initiate transcription.

It catalyses the reaction RNA(n) + a ribonucleoside 5'-triphosphate = RNA(n+1) + diphosphate. DNA-dependent RNA polymerase catalyzes the transcription of DNA into RNA using the four ribonucleoside triphosphates as substrates. The protein is DNA-directed RNA polymerase subunit beta of Rickettsia massiliae.